The primary structure comprises 808 residues: Sucrose synthase 2 (808 aa).

Ser10 is modified (phosphoserine; by CPK). Positions 272–749 (MMFNVVILSP…GLQRIYEKYT (478 aa)) are GT-B glycosyltransferase.

It belongs to the glycosyltransferase 1 family. Plant sucrose synthase subfamily. In terms of assembly, homotetramer or heterotetramer with SUS1. In terms of processing, phosphorylated at Ser-10 by CPK23 in developing seeds. Predominantly expressed in the leaf tissues. Expressed in seeds, and at lower levels in roots. Expressed in leaf mesophyll and phloem (at protein level).

The enzyme catalyses an NDP-alpha-D-glucose + D-fructose = a ribonucleoside 5'-diphosphate + sucrose + H(+). Activated by phosphorylation at Ser-10 by CPK23. In terms of biological role, sucrose-cleaving enzyme that provides UDP-glucose and fructose for various metabolic pathways. Functions in developing seeds by supplying substrates for the biosynthesis of storage products. This Oryza sativa subsp. japonica (Rice) protein is Sucrose synthase 2 (SUS2).